A 1507-amino-acid polypeptide reads, in one-letter code: Protein similar (1507 aa).

The interval 1–85 is disordered; sequence MVSLIDTIEA…KSRDAARCRR (85 aa). A compositionally biased stretch (low complexity) spans 26 to 49; that stretch reads SASSSSCSSSFSSSPPSSSVGSPS. Residues 72-85 show a composition bias toward basic and acidic residues; that stretch reads KRKEKSRDAARCRR. The bHLH domain occupies 72–125; it reads KRKEKSRDAARCRRSKETEIFMELSAALPLKTDDVNQLDKASVMRITIAFLKIR. PAS domains lie at 167-240 and 307-377; these read NGAE…LAQK and PHPS…LSKG. The 42-residue stretch at 381–422 folds into the PAC domain; it reads TSRYRFLGKYGGYCWILSQATIVYDKLKPQSVVCVNYVISNL. Disordered regions lie at residues 433-459, 541-588, 706-832, and 900-951; these read QQTA…KAAD, HSPG…PPPT, TCST…CSPN, and YAGN…QAAV. The span at 439-459 shows a compositional bias: basic and acidic residues; sequence EQKEQHHQAAETEKEPEKAAD. The segment covering 548-559 has biased composition (polar residues); it reads ITAQLLSGSSSG. Pro residues predominate over residues 578 to 588; the sequence is SPAPPLTPPPT. Residues 692–863 form an ODD region; that stretch reads TCLLPEDINS…IDDDMPLLTE (172 aa). The span at 706 to 717 shows a compositional bias: polar residues; it reads TCSTTASGQHYQ. 2 stretches are compositionally biased toward low complexity: residues 718–745 and 754–777; these read SPSS…LSPL and SNPS…QQQH. Residues 803 to 818 are compositionally biased toward polar residues; it reads DTSCSQHLHSPSITSK. Low complexity-rich tracts occupy residues 823 to 832, 907 to 918, and 926 to 951; these read SSLPSLCSPN, QQQQQQPQLQQQ, and SSPA…QAAV. A coiled-coil region spans residues 880 to 908; that stretch reads KEIDAIQQQLQQLQQQHHQQYAGNTGYQQ. 2 coiled-coil regions span residues 982-1054 and 1110-1162; these read AEEC…YDVQ and QLLQ…QLQQ. Disordered stretches follow at residues 1204 to 1228, 1251 to 1287, and 1356 to 1460; these read PQQQ…VESK, KDPA…QSNS, and FGGS…KTSI. The segment covering 1413 to 1423 has biased composition (polar residues); sequence SSTSNSTNQAE.

Efficient DNA binding requires dimerization with another bHLH protein. Interacts with Vhl. In terms of tissue distribution, ubiquitously expressed in the embryo.

It localises to the cytoplasm. The protein resides in the nucleus. Functionally, functions as a transcriptional regulator of the adaptive response to hypoxia. Binds to core DNA sequence 5'-[AG]CGTG-3' within the hypoxia response element (HRE) of target gene promoters. The sequence is that of Protein similar (sima) from Drosophila melanogaster (Fruit fly).